A 198-amino-acid polypeptide reads, in one-letter code: Thymidine kinase (198 aa).

ATP-binding positions include 9–16 (STMNAGKS) and 87–90 (DEAQ). Glu88 acts as the Proton acceptor in catalysis. Residues Cys145, Cys147, Cys182, and His185 each coordinate Zn(2+).

It belongs to the thymidine kinase family. As to quaternary structure, homotetramer.

The protein localises to the cytoplasm. It carries out the reaction thymidine + ATP = dTMP + ADP + H(+). In Ruegeria pomeroyi (strain ATCC 700808 / DSM 15171 / DSS-3) (Silicibacter pomeroyi), this protein is Thymidine kinase.